The sequence spans 434 residues: Histidinol dehydrogenase (434 aa).

NAD(+)-binding residues include Y130, Q188, and N211. Residues S237, Q259, and H262 each coordinate substrate. Q259 and H262 together coordinate Zn(2+). Catalysis depends on proton acceptor residues E326 and H327. 4 residues coordinate substrate: H327, D360, E414, and H419. D360 contributes to the Zn(2+) binding site. H419 contributes to the Zn(2+) binding site.

It belongs to the histidinol dehydrogenase family. Homodimer. It depends on Zn(2+) as a cofactor.

The enzyme catalyses L-histidinol + 2 NAD(+) + H2O = L-histidine + 2 NADH + 3 H(+). It functions in the pathway amino-acid biosynthesis; L-histidine biosynthesis; L-histidine from 5-phospho-alpha-D-ribose 1-diphosphate: step 9/9. Catalyzes the sequential NAD-dependent oxidations of L-histidinol to L-histidinaldehyde and then to L-histidine. This Shigella boydii serotype 4 (strain Sb227) protein is Histidinol dehydrogenase.